A 290-amino-acid chain; its full sequence is MISGYTALYGLIAHPAQHSLSPFIHNTGFHQIQMDARYAVFDSQATPAAITSAIKTLGIRGVNLSMPYKQSLVPLVDNLTSTAKLVGAINTIKNEAGRLTATNTDGDGFWCALQKAHPQRRYRSVTILGAGGAALAVIEAAVRYGVQQVTVFKRANATYDSVIQRLAQISLASGLQIIVEPYDDQLALATALQNADCLINATNIGMTATPGNPLPINLLQYLPEDSLVADLIYAPRETAFLKTAQKAHYQIQNGLGMLIEQAALSFEFWTNESMATMPIYQHLTGGNDAS.

Residues 19 to 21 and Ser-65 contribute to the shikimate site; that span reads SLS. Lys-69 functions as the Proton acceptor in the catalytic mechanism. Residues Asn-90 and Asp-105 each contribute to the shikimate site. NADP(+) is bound by residues 129-133 and Leu-231; that span reads GAGGA. Tyr-233 is a shikimate binding site. Gly-254 is an NADP(+) binding site.

It belongs to the shikimate dehydrogenase family. As to quaternary structure, homodimer.

It carries out the reaction shikimate + NADP(+) = 3-dehydroshikimate + NADPH + H(+). It functions in the pathway metabolic intermediate biosynthesis; chorismate biosynthesis; chorismate from D-erythrose 4-phosphate and phosphoenolpyruvate: step 4/7. Its function is as follows. Involved in the biosynthesis of the chorismate, which leads to the biosynthesis of aromatic amino acids. Catalyzes the reversible NADPH linked reduction of 3-dehydroshikimate (DHSA) to yield shikimate (SA). This is Shikimate dehydrogenase (NADP(+)) from Latilactobacillus sakei subsp. sakei (strain 23K) (Lactobacillus sakei subsp. sakei).